The following is a 631-amino-acid chain: Probable sulfate transporter 3.3 (631 aa).

Residues 1 to 69 (MEVHKVVAPP…EYSFSLLKSD (69 aa)) lie on the Cytoplasmic side of the membrane. The helical transmembrane segment at 70–90 (VVSGLTIASLAIPQGISYAKL) threads the bilayer. The Extracellular portion of the chain corresponds to 91–92 (AN). Residues 93–113 (LPPIVGLYSSFVPPLVYAVLG) form a helical membrane-spanning segment. At 114-117 (SSRD) the chain is on the cytoplasmic side. Residues 118–138 (LAVGPVSIASLILGSMLRQQV) traverse the membrane as a helical segment. Residues 139–144 (SPVDDP) are Extracellular-facing. The helical transmembrane segment at 145–165 (VLFLQLAFSSTFFAGLFQASL) threads the bilayer. The Cytoplasmic portion of the chain corresponds to 166–171 (GILRLG). Residues 172–192 (FIIDFLSKATLIGFMGGAAII) traverse the membrane as a helical segment. At 193-223 (VSLQQLKGLLGITHFTKHMSVVPVLSSVFQH) the chain is on the extracellular side. Residues 224-244 (TNEWSWQTIVMGVCFLLFLLS) form a helical membrane-spanning segment. The Cytoplasmic portion of the chain corresponds to 245 to 256 (TRHLSMKKPKLF). Residues 257-277 (WVSAGAPLLSVIVSTLLVFVF) traverse the membrane as a helical segment. The Extracellular segment spans residues 278-309 (RAERHGISVIGKLPEGLNPPSWNMLQFHGSHL). The helical transmembrane segment at 310-330 (ALVAKTGLVTGIVSLTEGIAV) threads the bilayer. The Cytoplasmic portion of the chain corresponds to 331-347 (GRTFAALKNYHVDGNKE). Residues 348 to 368 (MIAIGLMNVVGSATSCYVTTG) form a helical membrane-spanning segment. The Extracellular segment spans residues 369 to 384 (AFSRSAVNNNAGAKTA). Residues 385–405 (VSNIVMSVTVMVTLLFLMPLF) traverse the membrane as a helical segment. The Cytoplasmic portion of the chain corresponds to 406 to 410 (EYTPN). Residues 411-431 (VVLGAIIVTAVIGLIDLPAAC) form a helical membrane-spanning segment. The Extracellular segment spans residues 432-441 (HIWKIDKFDF). Residues 442–462 (LVMLCAFFGVIFLSVQNGLAI) traverse the membrane as a helical segment. Over 463-631 (AVGLSLFKIL…SLKGPSLSNV (169 aa)) the chain is Cytoplasmic. The STAS domain occupies 497–621 (HYKEAQRIPG…LTVAEAVASL (125 aa)).

The protein belongs to the SLC26A/SulP transporter (TC 2.A.53) family. As to expression, expressed only in leaves.

It localises to the membrane. Its function is as follows. H(+)/sulfate cotransporter that may play a role in the regulation of sulfate assimilation. This chain is Probable sulfate transporter 3.3 (SULTR3;3), found in Arabidopsis thaliana (Mouse-ear cress).